Consider the following 293-residue polypeptide: 4-hydroxy-tetrahydrodipicolinate synthase (293 aa).

Pyruvate is bound at residue Thr-47. Tyr-135 serves as the catalytic Proton donor/acceptor. Lys-164 functions as the Schiff-base intermediate with substrate in the catalytic mechanism. Position 205 (Ile-205) interacts with pyruvate.

The protein belongs to the DapA family. In terms of assembly, homotetramer; dimer of dimers.

The protein localises to the cytoplasm. It carries out the reaction L-aspartate 4-semialdehyde + pyruvate = (2S,4S)-4-hydroxy-2,3,4,5-tetrahydrodipicolinate + H2O + H(+). The protein operates within amino-acid biosynthesis; L-lysine biosynthesis via DAP pathway; (S)-tetrahydrodipicolinate from L-aspartate: step 3/4. Functionally, catalyzes the condensation of (S)-aspartate-beta-semialdehyde [(S)-ASA] and pyruvate to 4-hydroxy-tetrahydrodipicolinate (HTPA). In Symbiobacterium thermophilum (strain DSM 24528 / JCM 14929 / IAM 14863 / T), this protein is 4-hydroxy-tetrahydrodipicolinate synthase.